The sequence spans 356 residues: S-adenosylmethionine:tRNA ribosyltransferase-isomerase (356 aa).

Belongs to the QueA family. As to quaternary structure, monomer.

It localises to the cytoplasm. It catalyses the reaction 7-aminomethyl-7-carbaguanosine(34) in tRNA + S-adenosyl-L-methionine = epoxyqueuosine(34) in tRNA + adenine + L-methionine + 2 H(+). It participates in tRNA modification; tRNA-queuosine biosynthesis. In terms of biological role, transfers and isomerizes the ribose moiety from AdoMet to the 7-aminomethyl group of 7-deazaguanine (preQ1-tRNA) to give epoxyqueuosine (oQ-tRNA). This Escherichia coli O81 (strain ED1a) protein is S-adenosylmethionine:tRNA ribosyltransferase-isomerase.